We begin with the raw amino-acid sequence, 173 residues long: 3-hydroxydecanoyl-[acyl-carrier-protein] dehydratase (173 aa).

The active site involves His-71.

The protein belongs to the thioester dehydratase family. FabA subfamily. As to quaternary structure, homodimer.

It localises to the cytoplasm. The catalysed reaction is a (3R)-hydroxyacyl-[ACP] = a (2E)-enoyl-[ACP] + H2O. It carries out the reaction (3R)-hydroxydecanoyl-[ACP] = (2E)-decenoyl-[ACP] + H2O. The enzyme catalyses (2E)-decenoyl-[ACP] = (3Z)-decenoyl-[ACP]. Its pathway is lipid metabolism; fatty acid biosynthesis. Its function is as follows. Necessary for the introduction of cis unsaturation into fatty acids. Catalyzes the dehydration of (3R)-3-hydroxydecanoyl-ACP to E-(2)-decenoyl-ACP and then its isomerization to Z-(3)-decenoyl-ACP. Can catalyze the dehydratase reaction for beta-hydroxyacyl-ACPs with saturated chain lengths up to 16:0, being most active on intermediate chain length. The protein is 3-hydroxydecanoyl-[acyl-carrier-protein] dehydratase of Bradyrhizobium sp. (strain BTAi1 / ATCC BAA-1182).